A 261-amino-acid chain; its full sequence is Rho-related GTP-binding protein RhoU (261 aa).

Positions 1 to 48 are disordered; sequence MAPQQGRPALPARCEPPAAPPVPPRRERGGRGARGPGVSGGRGRAGGA. The span at 7-16 shows a compositional bias: low complexity; sequence RPALPARCEP. A compositionally biased stretch (gly residues) spans 32–48; the sequence is GARGPGVSGGRGRAGGA. GTP contacts are provided by residues 59–66, 106–110, and 164–167; these read GDGAVGKT, DTAGQ, and TQSD. Glycyl lysine isopeptide (Lys-Gly) (interchain with G-Cter in ubiquitin) cross-links involve residues K180 and K251. C259 is lipidated: S-palmitoyl cysteine.

This sequence belongs to the small GTPase superfamily. Rho family. In terms of assembly, interacts with PAK1. Interacts with PAK3. Interacts with ARHGAP30 in a GTP-independent manner. In its GTP-loaded conformation, interacts with ARHGAP31. Interacts with PTK2B/PYK2. Interacts with PAK4; interaction protects RHOU from ubiquitination and subsequent degradation. Mg(2+) is required as a cofactor. Post-translationally, tyrosine phosphorylated by SRC in response to PTK2B/PYK2 activation. In terms of processing, ubiquitinated. 'Lys-48'-linked ubiquitination at Lys-180 and Lys-251 by the ECS(RAB40A) complex leading to its degradation.

It is found in the cell membrane. The protein resides in the golgi apparatus membrane. Its subcellular location is the cell junction. It localises to the focal adhesion. The protein localises to the cell projection. It is found in the podosome. Functionally, binds to and activates protein kinase PAK1. Plays a role in the regulation of cell morphology, cytoskeletal organization and focal adhesion assembly during cell migration. Also stimulates quiescent cells to reenter the cell cycle. Has no detectable GTPase activity but its high intrinsic guanine nucleotide exchange activity suggests it is constitutively GTP-bound. This chain is Rho-related GTP-binding protein RhoU, found in Mus musculus (Mouse).